The following is a 431-amino-acid chain: Enolase (431 aa).

A (2R)-2-phosphoglycerate-binding site is contributed by Gln168. Residue Glu210 is the Proton donor of the active site. Mg(2+) is bound by residues Asp247, Glu291, and Asp318. 4 residues coordinate (2R)-2-phosphoglycerate: Lys343, Arg372, Ser373, and Lys394. Lys343 serves as the catalytic Proton acceptor.

This sequence belongs to the enolase family. As to quaternary structure, component of the RNA degradosome, a multiprotein complex involved in RNA processing and mRNA degradation. Mg(2+) serves as cofactor.

Its subcellular location is the cytoplasm. It localises to the secreted. The protein localises to the cell surface. It carries out the reaction (2R)-2-phosphoglycerate = phosphoenolpyruvate + H2O. It functions in the pathway carbohydrate degradation; glycolysis; pyruvate from D-glyceraldehyde 3-phosphate: step 4/5. Its function is as follows. Catalyzes the reversible conversion of 2-phosphoglycerate (2-PG) into phosphoenolpyruvate (PEP). It is essential for the degradation of carbohydrates via glycolysis. The polypeptide is Enolase (Acinetobacter baumannii (strain SDF)).